Reading from the N-terminus, the 200-residue chain is Recombination protein RecR (200 aa).

The C4-type zinc finger occupies 58-75 (CSNCFCLKISQTSPCNFC). The 96-residue stretch at 82-177 (SSLCIVATPK…KISRLALGMP (96 aa)) folds into the Toprim domain.

This sequence belongs to the RecR family.

Functionally, may play a role in DNA repair. It seems to be involved in an RecBC-independent recombinational process of DNA repair. It may act with RecF and RecO. The protein is Recombination protein RecR of Chlamydia trachomatis serovar L2 (strain ATCC VR-902B / DSM 19102 / 434/Bu).